The following is a 266-amino-acid chain: Probable sporulation sigma-E factor-processing peptidase (266 aa).

A run of 4 helical transmembrane segments spans residues 36-52 (LILAGIFGGLYVIVLVI), 60-76 (SLIFKIIAAFLMIIICF), 89-105 (AVLIMYSMVTAGLCFFI), and 126-142 (WILIAIMIIYMFVNRII). Asp-174 is a catalytic residue.

The protein belongs to the peptidase U4 family.

The protein resides in the cell membrane. In terms of biological role, probable aspartic protease that is responsible for the proteolytic cleavage of the RNA polymerase sigma E factor (SigE/spoIIGB) to yield the active peptide in the mother cell during sporulation. Responds to a signal from the forespore that is triggered by the extracellular signal protein SpoIIR. This Clostridium acetobutylicum (strain ATCC 824 / DSM 792 / JCM 1419 / IAM 19013 / LMG 5710 / NBRC 13948 / NRRL B-527 / VKM B-1787 / 2291 / W) protein is Probable sporulation sigma-E factor-processing peptidase (spoIIGA).